A 450-amino-acid polypeptide reads, in one-letter code: Phosphoglucosamine mutase (450 aa).

Ser102 serves as the catalytic Phosphoserine intermediate. The Mg(2+) site is built by Ser102, Asp243, Asp245, and Asp247. Residue Ser102 is modified to Phosphoserine.

It belongs to the phosphohexose mutase family. Mg(2+) serves as cofactor. Post-translationally, activated by phosphorylation.

The enzyme catalyses alpha-D-glucosamine 1-phosphate = D-glucosamine 6-phosphate. In terms of biological role, catalyzes the conversion of glucosamine-6-phosphate to glucosamine-1-phosphate. The chain is Phosphoglucosamine mutase from Rhizobium meliloti (strain 1021) (Ensifer meliloti).